We begin with the raw amino-acid sequence, 159 residues long: Globin C, coelomic (159 aa).

At glycine 2 the chain carries N-acetylglycine. In terms of domain architecture, Globin spans 12-158 (DLTLAQKKIV…VQAVLLVKHG (147 aa)). Histidine 74 and histidine 105 together coordinate heme b.

The protein belongs to the globin family. As to quaternary structure, monomer.

This is Globin C, coelomic from Molpadia arenicola (Sea cucumber).